We begin with the raw amino-acid sequence, 296 residues long: GTPase Era (296 aa).

Residues 3 to 170 (KSGFITIVGR…LELMVKYLPE (168 aa)) form the Era-type G domain. The segment at 11–18 (GRPNVGKS) is G1. 11–18 (GRPNVGKS) provides a ligand contact to GTP. A G2 region spans residues 37-41 (QTTRN). Positions 58–61 (DTPG) are G3. Residues 58 to 62 (DTPGI) and 120 to 123 (NKVD) each bind GTP. Positions 120-123 (NKVD) are G4. The tract at residues 149-151 (ISA) is G5. In terms of domain architecture, KH type-2 spans 201 to 278 (LSQEVPHGIA…NIKIWVKVRK (78 aa)).

This sequence belongs to the TRAFAC class TrmE-Era-EngA-EngB-Septin-like GTPase superfamily. Era GTPase family. Monomer.

Its subcellular location is the cytoplasm. The protein localises to the cell membrane. In terms of biological role, an essential GTPase that binds both GDP and GTP, with rapid nucleotide exchange. Plays a role in 16S rRNA processing and 30S ribosomal subunit biogenesis and possibly also in cell cycle regulation and energy metabolism. This is GTPase Era from Clostridium perfringens (strain ATCC 13124 / DSM 756 / JCM 1290 / NCIMB 6125 / NCTC 8237 / Type A).